Consider the following 206-residue polypeptide: 2-phospho-L-lactate guanylyltransferase (206 aa).

It belongs to the CofC family. In terms of assembly, homodimer.

It catalyses the reaction (2S)-2-phospholactate + GTP + H(+) = (2S)-lactyl-2-diphospho-5'-guanosine + diphosphate. It participates in cofactor biosynthesis; coenzyme F420 biosynthesis. Functionally, guanylyltransferase that catalyzes the activation of (2S)-2-phospholactate (2-PL) as (2S)-lactyl-2-diphospho-5'-guanosine, via the condensation of 2-PL with GTP. It is involved in the biosynthesis of coenzyme F420, a hydride carrier cofactor. In Archaeoglobus fulgidus (strain ATCC 49558 / DSM 4304 / JCM 9628 / NBRC 100126 / VC-16), this protein is 2-phospho-L-lactate guanylyltransferase.